A 453-amino-acid chain; its full sequence is GTPase Der (453 aa).

EngA-type G domains follow at residues 4–169 (PIVA…PTQG) and 177–352 (TKIA…NEYQ). Residues 10–17 (GRPNVGKS), 57–61 (DTGGL), 120–123 (NKCE), 183–190 (GRPNVGKS), 230–234 (DTAGI), and 295–298 (NKWD) contribute to the GTP site. The KH-like domain occupies 353–438 (RRVTTSVINE…PIRLLWRGKK (86 aa)).

The protein belongs to the TRAFAC class TrmE-Era-EngA-EngB-Septin-like GTPase superfamily. EngA (Der) GTPase family. Associates with the 50S ribosomal subunit.

GTPase that plays an essential role in the late steps of ribosome biogenesis. This chain is GTPase Der, found in Trichodesmium erythraeum (strain IMS101).